The sequence spans 409 residues: Effector protein BipC (409 aa).

Disordered regions lie at residues Arg268–Asp287 and Ser330–Asp396. A compositionally biased stretch (low complexity) spans Ala360–Ser369. Residues Ala370–Ala382 show a composition bias toward basic and acidic residues.

Belongs to the SctB/SipC family.

The protein localises to the secreted. This chain is Effector protein BipC (bipC), found in Burkholderia thailandensis (strain ATCC 700388 / DSM 13276 / CCUG 48851 / CIP 106301 / E264).